A 327-amino-acid chain; its full sequence is ATPase ASNA1 homolog (327 aa).

Residue 26 to 33 (KGGVGKTT) participates in ATP binding. Aspartate 57 is a catalytic residue. Positions 238 and 265 each coordinate ATP. 2 residues coordinate Zn(2+): cysteine 274 and cysteine 277.

Belongs to the arsA ATPase family. In terms of assembly, homodimer.

Its subcellular location is the cytoplasm. It is found in the endoplasmic reticulum. Its function is as follows. ATPase required for the post-translational delivery of tail-anchored (TA) proteins to the endoplasmic reticulum. Recognizes and selectively binds the transmembrane domain of TA proteins in the cytosol. This complex then targets to the endoplasmic reticulum by membrane-bound receptors, where the tail-anchored protein is released for insertion. This process is regulated by ATP binding and hydrolysis. ATP binding drives the homodimer towards the closed dimer state, facilitating recognition of newly synthesized TA membrane proteins. ATP hydrolysis is required for insertion. Subsequently, the homodimer reverts towards the open dimer state, lowering its affinity for the membrane-bound receptor, and returning it to the cytosol to initiate a new round of targeting. The chain is ATPase ASNA1 homolog from Entamoeba dispar (strain ATCC PRA-260 / SAW760).